Here is a 247-residue protein sequence, read N- to C-terminus: 3-deoxy-manno-octulosonate cytidylyltransferase (247 aa).

The protein belongs to the KdsB family.

The protein resides in the cytoplasm. It catalyses the reaction 3-deoxy-alpha-D-manno-oct-2-ulosonate + CTP = CMP-3-deoxy-beta-D-manno-octulosonate + diphosphate. It functions in the pathway nucleotide-sugar biosynthesis; CMP-3-deoxy-D-manno-octulosonate biosynthesis; CMP-3-deoxy-D-manno-octulosonate from 3-deoxy-D-manno-octulosonate and CTP: step 1/1. It participates in bacterial outer membrane biogenesis; lipopolysaccharide biosynthesis. Functionally, activates KDO (a required 8-carbon sugar) for incorporation into bacterial lipopolysaccharide in Gram-negative bacteria. This is 3-deoxy-manno-octulosonate cytidylyltransferase from Chlorobium limicola (strain DSM 245 / NBRC 103803 / 6330).